Consider the following 237-residue polypeptide: 7-carboxy-7-deazaguanine synthase (237 aa).

Substrate is bound by residues 15–17 and Arg-30; that span reads LSG. Residues 21–233 form the Radical SAM core domain; the sequence is STGIPTIFVR…IQTHKYIWGD (213 aa). [4Fe-4S] cluster-binding residues include Cys-34, Cys-38, and Cys-48. A Mg(2+)-binding site is contributed by Thr-50. Thr-84 contacts substrate. Gly-86 contributes to the S-adenosyl-L-methionine binding site.

It belongs to the radical SAM superfamily. 7-carboxy-7-deazaguanine synthase family. In terms of assembly, homodimer. [4Fe-4S] cluster is required as a cofactor. Requires S-adenosyl-L-methionine as cofactor. It depends on Mg(2+) as a cofactor.

It carries out the reaction 6-carboxy-5,6,7,8-tetrahydropterin + H(+) = 7-carboxy-7-deazaguanine + NH4(+). It functions in the pathway purine metabolism; 7-cyano-7-deazaguanine biosynthesis. Functionally, catalyzes the complex heterocyclic radical-mediated conversion of 6-carboxy-5,6,7,8-tetrahydropterin (CPH4) to 7-carboxy-7-deazaguanine (CDG), a step common to the biosynthetic pathways of all 7-deazapurine-containing compounds. The sequence is that of 7-carboxy-7-deazaguanine synthase from Leptospira interrogans serogroup Icterohaemorrhagiae serovar Lai (strain 56601).